Consider the following 852-residue polypeptide: Exported protein YdbA (852 aa).

The first 21 residues, 1 to 21 (MQRKTLLSACIALALSGQGWA), serve as a signal peptide directing secretion. 5 disordered regions span residues 30–50 (TTGEKKNTNVTCPADPGKLSP), 91–145 (DDDH…FNND), 307–354 (TITN…QDGD), 407–449 (TNGG…KVIQ), and 506–531 (NGGTGTQINGNDATANNSGKTTVDGK). The span at 307–319 (TITNGGTGTQING) shows a compositional bias: low complexity. The segment covering 339–348 (GTEINGNNGK) has biased composition (polar residues). Over residues 506-516 (NGGTGTQINGN) the composition is skewed to low complexity. Residues 517–526 (DATANNSGKT) show a composition bias toward polar residues.

Its subcellular location is the secreted. Functionally, the full-length protein (which is about 2000 amino acids long) is part of the autotransporter family. The sequence is that of Exported protein YdbA (ydbA) from Escherichia coli (strain K12).